The sequence spans 964 residues: MALLCGLGQVTLRLWVPLPFQSENRIGFLAAGAFLRSGGMEALTTQLGPGREGSSSPNSKQELQPYSGSSALKPNQVGETSLYGVPIVSLVIDGQERLCLAQISNTLLKNYSYNEIHNRRVALGITCVQCTPVQLEILRRAGAMPISSRRCGMITKREAERLCKSFLGEHKPPKLPENFAFDVVHECAWGSRGSFIPARYNSSRAKCIKCGYCSMYFSPNKFIFHSHRTPDAKYTQPDAANFNSWRRHLKLSDKSATDELSHAWEDVKAMFNGGTRKRTFSLQGGGGGGANSGSGGAGKGGAGGGGGPGCGSEMAPGPPPHKSLRCGEDEAAGPPGPPPPHPQRALGLAAAASGPAGPGGPGGSAGVRSYPVIPVPSKGFGLLQKLPPPLFPHPYGFPTAFGLCPKKDDPVLVAGEPKGGPGTGSSGGAGTAAGAGGPGAGHLPPGAGPGPGGGTMFWGHQPSGAAKDAAAVAAAAAAATVYPTFPMFWPAAGSLPVPPYPAAQSQAKAVAAAVAAAAAAAAAAAGGGGPESLDGAEPAKEGSLGTEERCPSALSRGPLDEDGADEALPPSLGPLPPPPPPPARKSSYVSAFRPVVKDAESIAKLYGSAREAYGSGPARGPVPGTGTGGGYVSPDFLSEGSSSYHSASPDVDTADEPEVDVESNRFPDEEGAQDDTEPRAPSTGGGPDGDQPAGPPSVTSSGADGPTDSADGDSPRPRRRLGPPPAIRSAFGDLVADDVVRRTERSPPSGGYELREPCGPLGGPGAAKVYAPERDEHVKSTAVAAALGPAASYLCTPETHEPDKEDNHSTTADDLETRKSFSDQRSVSQPSPANTDRGEDGLTLDVTGTQLVEKDIENLAREELQKLLLEQMELRKKLEREFQSLKDNFQDQMKRELAYREEMVQQLQIVRDTLCNELDQERKARYAIQQKLKEAHDALHHFSCKMLTPRHCTGNCSFKPPLLP.

Disordered regions lie at residues 45–72 (TQLG…SSAL), 278–365 (RTFS…GGSA), 414–461 (AGEP…WGHQ), 525–587 (AGGG…RKSS), 610–768 (REAY…GAAK), and 794–842 (LCTP…EDGL). Residues 283 to 310 (QGGGGGGANSGSGGAGKGGAGGGGGPGC) show a composition bias toward gly residues. Over residues 345–355 (ALGLAAAASGP) the composition is skewed to low complexity. 2 stretches are compositionally biased toward gly residues: residues 356–365 (AGPGGPGGSA) and 417–440 (PKGG…GPGA). Residues 571-583 (SLGPLPPPPPPPA) show a composition bias toward pro residues. The segment covering 652 to 661 (DTADEPEVDV) has biased composition (acidic residues). The segment covering 798–808 (ETHEPDKEDNH) has biased composition (basic and acidic residues). Residues 823-834 (DQRSVSQPSPAN) are compositionally biased toward polar residues. Residues 853–921 (EKDIENLARE…DTLCNELDQE (69 aa)) adopt a coiled-coil conformation.

The protein belongs to the SKI family. Interacts with SMAD1, SMAD2 and SMAD3. Interacts with LBX1. Expressed in brain with higher levels in embryo than adult. Expressed by migratory precursors of Purkinje cells in the postnatal brain. Also expressed in adult testis.

The protein resides in the nucleus. Inhibits BMP signaling. Acts as a transcriptional corepressor of LBX1. In Mus musculus (Mouse), this protein is SKI family transcriptional corepressor 1 (Skor1).